Reading from the N-terminus, the 1058-residue chain is Structural maintenance of chromosomes protein 6A (1058 aa).

Residues 23 to 1049 (ILRIRLENFM…SMVKSHEKIK (1027 aa)) form the Zinc-hook domain. 50-57 (GQNGSGKS) is an ATP binding site. Positions 136-449 (KISSRKEELR…NDLKKHQTNK (314 aa)) form a coiled coil. Residues 450–633 (VTAFGGDKVI…PPRPRRPTRL (184 aa)) form a flexible hinge region. A coiled-coil region spans residues 634–927 (CASFDDQIKD…RNKDLLKREL (294 aa)).

It belongs to the SMC family. SMC6 subfamily. As to quaternary structure, forms a heterodimer with SMC5. The SMC5-SMC6 complex is composed of the SMC5 and SMC6 heterodimer attached via their hinge domain and from the non-SMC subunit NSE4A or NSE4B. As to expression, expressed in seedlings, rosette leaves and floral buds.

Its subcellular location is the nucleus. The protein localises to the chromosome. Core component of the SMC5-SMC6 complex that promotes sister chromatid alignment after DNA damage and facilitates double-stranded DNA breaks (DSBs) repair via homologous recombination between sister chromatids. This chain is Structural maintenance of chromosomes protein 6A (SMC6A), found in Arabidopsis thaliana (Mouse-ear cress).